A 438-amino-acid chain; its full sequence is MKKLLLAASIICLASAGLAEENPTPVISNSDTEIKLEGFYLFENGYVKQDHLILFDKNVTDNRKKLGFYTEAAFAATIAKTINDVIAGAKIVLQPTTRAKTSTNYNGSHIFIETSYGKVELGSPADASAKLRITGSQVTAGTGGWSRYALLDGQYMRYNGLKSDFDTNASFYLESYSNSFDQINDKAERARRLNFFTPKMKGFQAGVSYTPDTANTGGNRDINNLTLASSGRNGVSVSKTGIKTVKLENNETMTINQNIRDAFSAGLTYEHEISEDADLKLSVTGEYGKPARRLIHAKMDGTTIQVLNTYKLSNLKAYNLGAVFTYGNFSCGASYGNLGKSLTAKEYYKVGRDTYYYNGAVAYGQGPIKTSLEYLKTSRYKNTVDAVSLATEYKIMPGLLPYAEISHFQAKGKPVYYPEAPSKTTRGTVGLIGTKLKF.

Residues 1–19 (MKKLLLAASIICLASAGLA) form the signal peptide.

This is an uncharacterized protein from Rickettsia conorii (strain ATCC VR-613 / Malish 7).